An 852-amino-acid polypeptide reads, in one-letter code: Nucleolar protein 14 homolog (852 aa).

The interval 1-40 (MVAKGKKASADAVYAKKTTRSANPFDNSTAQSSKRGNPFD) is disordered. The span at 20–35 (RSANPFDNSTAQSSKR) shows a compositional bias: polar residues. The stretch at 190-221 (IDEMIVEQKRRKNEIAKEKDEVYDLTEKLDAN) forms a coiled coil. Disordered regions lie at residues 288–324 (RRMR…GEDD) and 338–410 (LGTH…KSAD). The segment covering 344–353 (GKKEAVLKGD) has biased composition (basic and acidic residues). Positions 354 to 381 (ENEDDDDKEGEEEEEEDSDEESDSEVDN) are enriched in acidic residues. The stretch at 774–851 (KMSKAKEERA…ELSRAKKKKK (78 aa)) forms a coiled coil.

Belongs to the NOP14 family. In terms of assembly, component of the ribosomal small subunit (SSU) processome.

The protein resides in the nucleus. Its subcellular location is the nucleolus. In terms of biological role, involved in nucleolar processing of pre-18S ribosomal RNA. Has a role in the nuclear export of 40S pre-ribosomal subunit to the cytoplasm. This is Nucleolar protein 14 homolog (l(3)07882) from Drosophila melanogaster (Fruit fly).